The following is a 208-amino-acid chain: Small ribosomal subunit protein uS2 (208 aa).

The disordered stretch occupies residues 189–208 (KPDQDLPVPPEEFETKLVQS).

Belongs to the universal ribosomal protein uS2 family.

This chain is Small ribosomal subunit protein uS2 (rps2), found in Pyrobaculum aerophilum (strain ATCC 51768 / DSM 7523 / JCM 9630 / CIP 104966 / NBRC 100827 / IM2).